A 964-amino-acid chain; its full sequence is Translation initiation factor IF-2 (964 aa).

Residues 49–357 form a disordered region; that stretch reads QIGSAEPADD…QEFDEMQAPL (309 aa). A compositionally biased stretch (low complexity) spans 62 to 85; the sequence is AKPAARKSQTSSKKTSKETTTAKP. A compositionally biased stretch (pro residues) spans 86–102; it reads APGPKPGPGPKPTPGPR. Low complexity predominate over residues 103–117; sequence PGSSSGPKPGRSSAA. Residues 159–169 show a composition bias toward pro residues; the sequence is PHAPAPKPKPG. Composition is skewed to low complexity over residues 190 to 212 and 242 to 251; these read GLPSAARPGPRPGAGRRTGAPRP and GQGERMPRPG. Composition is skewed to gly residues over residues 252 to 261 and 284 to 334; these read GSQGSRGGSG and GRGG…GRGG. The segment covering 335–346 has biased composition (basic residues); the sequence is GGRRGRKSRKQR. The 172-residue stretch at 458–629 folds into the tr-type G domain; the sequence is ARPPVVTVMG…AIVLTADAAL (172 aa). The tract at residues 467-474 is G1; sequence GHVDHGKT. 467 to 474 provides a ligand contact to GTP; sequence GHVDHGKT. The interval 492-496 is G2; it reads GITQA. The segment at 517 to 520 is G3; sequence DTPG. GTP-binding positions include 517-521 and 571-574; these read DTPGH and NKID. The segment at 571 to 574 is G4; it reads NKID. A G5 region spans residues 607-609; it reads SAR.

It belongs to the TRAFAC class translation factor GTPase superfamily. Classic translation factor GTPase family. IF-2 subfamily.

It is found in the cytoplasm. One of the essential components for the initiation of protein synthesis. Protects formylmethionyl-tRNA from spontaneous hydrolysis and promotes its binding to the 30S ribosomal subunits. Also involved in the hydrolysis of GTP during the formation of the 70S ribosomal complex. The polypeptide is Translation initiation factor IF-2 (Cutibacterium acnes (strain DSM 16379 / KPA171202) (Propionibacterium acnes)).